A 157-amino-acid polypeptide reads, in one-letter code: uncharacterized protein (157 aa).

A helical membrane pass occupies residues 42–64; sequence SCIRLIVMFICVAMITCPNSLRF.

The protein localises to the membrane. This is an uncharacterized protein from Saccharomyces cerevisiae (strain ATCC 204508 / S288c) (Baker's yeast).